The sequence spans 309 residues: Transcriptional regulator HilD (309 aa).

Positions 209 to 306 (ERVYNIISSS…KTTPSTFIKM (98 aa)) constitute an HTH araC/xylS-type domain. 2 DNA-binding regions (H-T-H motif) span residues 226-247 (TDVA…AEEG) and 273-296 (VNAV…KKYF).

This is Transcriptional regulator HilD (hilD) from Salmonella typhimurium (strain SL1344).